The primary structure comprises 325 residues: Serpentine receptor class gamma-16 (325 aa).

Helical transmembrane passes span 25–45, 65–85, 87–107, 144–164, 187–207, 232–252, and 264–284; these read FCLY…ILLI, VVSL…MFIP, LCPL…MYYW, LAVT…WNLL, WASL…FTII, FVSL…LIFV, and LLFQ…IIML.

It belongs to the nematode receptor-like protein srg family.

The protein localises to the membrane. In Caenorhabditis elegans, this protein is Serpentine receptor class gamma-16 (srg-16).